Here is an 883-residue protein sequence, read N- to C-terminus: MPILLFLIDTSASMNQRSHLGTTYLDTAKGAVETFMKLRARDPASRGDRYMLVTFEEPPYAIKAGWKENHATFMNELKNLQAEGLTTLGQSLRTAFDLLNLNRLVTGIDNYGQGRNPFFLEPAIIITITDGSKLTTTSGVQDELHLPLNSPLPGSELTKEPFRWDQRLFALVLRLPGTMSVESEQLTGVPLDDSAITPMCEVTGGRSYSVCSPRMLNQCLESLVQKVQSGVVINFEKAGPDPPPAEEGQPDISRPFGSQPWHSCHKLIYVRPNPKTGVPIGHWPVPESFWPDQNSPTLPPRTSHPVVKFSCTDCEPMVIDKLPFDKYELEPSPLTQFILERKSPQTCWQVYVSNSAKYNELGHPFGYLKASTALTCVNLFVMPYNYPVLLPLLDDLFKVHKAKPTLKWRQSFESYLKTMPPYYLGPLKKAVRMMGAPNLIADSMEYGLSYSVISYLKKLSQQAKIESDRVIGSVGKKVVQETGIKVRSRSHGLSMAHRKGFQVLQGISEDVPHRLLDLNMKEYTGFQVALLNKDLKPQTFRNAYDIPRRNLLDHLTRMRSNLLKSTRKFLKGQDEDQVHSVPIAQMGNYQEYLKQVPSPLRELDPDQPRRLHTFGNPFKLDKKGMMIDEADEFVAGPQNKHKRPGEPSMQGIPKRRRCASPLLRGRRQSPAVNSHIGGKGPPAPMTQAQPGLIKPLPLHKEATNDSIVDDVVENHVADQLSSDMTPNAMDTEFLTSPPNLLEPSTNHTEALGHEHLGNNDLTVGGFLENHEEPRNKEQSAEENIPASSLNKGKKLMHCRSHEEVNTELKAQIMKEIRKPGRKYERIFTLLKHVQGSLQTRLIFLQNVIKEASRFKKRMLIEQLENFLDEIHRRANQINHINSN.

The region spanning 3–227 (ILLFLIDTSA…QCLESLVQKV (225 aa)) is the VWFA domain. Positions 625 to 632 (MMIDEADE) match the Inhibitory loop motif. The disordered stretch occupies residues 666–686 (RRQSPAVNSHIGGKGPPAPMT). Residue serine 800 is modified to Phosphoserine.

Belongs to the Integrator subunit 6 family. Component of the Integrator complex, composed of core subunits INTS1, INTS2, INTS3, INTS4, INTS5, INTS6, INTS7, INTS8, INTS9/RC74, INTS10, INTS11/CPSF3L, INTS12, INTS13, INTS14 and INTS15. The core complex associates with protein phosphatase 2A subunits PPP2CA and PPP2R1A, to form the Integrator-PP2A (INTAC) complex.

It is found in the nucleus. Its subcellular location is the chromosome. Functionally, component of the integrator complex, a multiprotein complex that terminates RNA polymerase II (Pol II) transcription in the promoter-proximal region of genes. The integrator complex provides a quality checkpoint during transcription elongation by driving premature transcription termination of transcripts that are unfavorably configured for transcriptional elongation: the complex terminates transcription by (1) catalyzing dephosphorylation of the C-terminal domain (CTD) of Pol II subunit POLR2A/RPB1 and SUPT5H/SPT5, (2) degrading the exiting nascent RNA transcript via endonuclease activity and (3) promoting the release of Pol II from bound DNA. The integrator complex is also involved in terminating the synthesis of non-coding Pol II transcripts, such as enhancer RNAs (eRNAs), small nuclear RNAs (snRNAs), telomerase RNAs and long non-coding RNAs (lncRNAs). Within the integrator complex, INTS6 acts as a molecular adapter that promotes assembly of protein phosphatase 2A (PP2A) subunits to the integrator core complex, promoting recruitment of PP2A to transcription pause-release checkpoint. Mediates recruitment of cytoplasmic dynein to the nuclear envelope, probably as component of the integrator complex. The chain is Integrator complex subunit 6 (Ints6) from Mus musculus (Mouse).